The chain runs to 309 residues: Elongation factor Ts (309 aa).

Positions 82 to 85 (TDFV) are involved in Mg(2+) ion dislocation from EF-Tu.

It belongs to the EF-Ts family.

It localises to the cytoplasm. Functionally, associates with the EF-Tu.GDP complex and induces the exchange of GDP to GTP. It remains bound to the aminoacyl-tRNA.EF-Tu.GTP complex up to the GTP hydrolysis stage on the ribosome. The sequence is that of Elongation factor Ts from Rickettsia rickettsii (strain Iowa).